We begin with the raw amino-acid sequence, 338 residues long: Formamidase (338 aa).

The 244-residue stretch at 14–257 (VGIGLVQLQL…NEIITAEVRP (244 aa)) folds into the CN hydrolase domain. Glutamate 60 acts as the Proton acceptor in catalysis. Residue lysine 129 is the Proton donor of the active site. Residue cysteine 162 is the Nucleophile of the active site.

It belongs to the carbon-nitrogen hydrolase superfamily. Aliphatic amidase family.

It catalyses the reaction formamide + H2O = formate + NH4(+). Functionally, is an aliphatic amidase with a restricted substrate specificity, as it only hydrolyzes formamide. The chain is Formamidase from Allorhizobium ampelinum (strain ATCC BAA-846 / DSM 112012 / S4) (Agrobacterium vitis (strain S4)).